Reading from the N-terminus, the 341-residue chain is Phosphate acyltransferase (341 aa).

It belongs to the PlsX family. In terms of assembly, homodimer. Probably interacts with PlsY.

Its subcellular location is the cytoplasm. The catalysed reaction is a fatty acyl-[ACP] + phosphate = an acyl phosphate + holo-[ACP]. The protein operates within lipid metabolism; phospholipid metabolism. Catalyzes the reversible formation of acyl-phosphate (acyl-PO(4)) from acyl-[acyl-carrier-protein] (acyl-ACP). This enzyme utilizes acyl-ACP as fatty acyl donor, but not acyl-CoA. The chain is Phosphate acyltransferase from Photobacterium profundum (strain SS9).